Reading from the N-terminus, the 117-residue chain is MTRAKSGKISKNRHKKILKLAKGYRGRANSCFRVAIAKVEKALQYAYRDRRNRKRNFRGLWIQRINAAVRTHGLIYSQFMGTLKKAGIDIDRKVLAELAVNNSDGFASIVEKAKAHI.

Belongs to the bacterial ribosomal protein bL20 family.

Functionally, binds directly to 23S ribosomal RNA and is necessary for the in vitro assembly process of the 50S ribosomal subunit. It is not involved in the protein synthesizing functions of that subunit. The chain is Large ribosomal subunit protein bL20 from Rickettsia canadensis (strain McKiel).